The primary structure comprises 299 residues: Putative fructokinase (299 aa).

Position 130 (threonine 130) interacts with ATP. Residues histidine 153, cysteine 168, histidine 171, and cysteine 174 each contribute to the Zn(2+) site. Residues proline 182 and 230-234 each bind ATP; that span reads GVMQQ.

Belongs to the ROK (NagC/XylR) family. Mg(2+) is required as a cofactor.

It carries out the reaction D-fructose + ATP = D-fructose 6-phosphate + ADP + H(+). With respect to regulation, inhibited by zinc ions. Its function is as follows. Seems to be involved in the degradation of glucomannan. This chain is Putative fructokinase (gmuE), found in Bacillus subtilis (strain 168).